An 82-amino-acid chain; its full sequence is UPF0512 protein P (82 aa).

The protein belongs to the UPF0512 family.

This is UPF0512 protein P from Dictyostelium discoideum (Social amoeba).